We begin with the raw amino-acid sequence, 122 residues long: Phospholipase A2 crotoxin basic chain (122 aa).

Intrachain disulfides connect Cys26-Cys115, Cys28-Cys44, Cys43-Cys95, Cys49-Cys122, Cys50-Cys88, Cys57-Cys81, and Cys75-Cys86. Ca(2+) is bound by residues Tyr27, Gly29, and Gly31. Residue His47 is part of the active site. Asp48 provides a ligand contact to Ca(2+). Asp89 is an active-site residue.

As to quaternary structure, heterodimer of one acidic (CA also named crotapotin) and one basic (CB) subunits; non-covalently linked. The cofactor is Ca(2+). Expressed by the venom gland.

The protein localises to the secreted. It carries out the reaction a 1,2-diacyl-sn-glycero-3-phosphocholine + H2O = a 1-acyl-sn-glycero-3-phosphocholine + a fatty acid + H(+). Its function is as follows. Heterodimer CA-CB: Crotoxin is a potent presynaptic neurotoxin that possesses phospholipase A2 (PLA2) activity and exerts a lethal action by blocking neuromuscular transmission. It consists of a non-covalent association of a basic and weakly toxic PLA2 subunit (CB), with a small acidic, non-enzymatic and non-toxic subunit (CA also named crotapotin). The complex acts by binding to a specific 48-kDa protein (R48) receptor located on presynaptic membranes, forming a transient ternary complex CA-CB-R48, followed by dissociation of the CA-CB complex and release of the CA subunit. At equilibrium, only the CB subunits remain associated with the specific crotoxin receptor. In addition to neurotoxicity, crotoxin has been found to exert nephrotoxicity, and cardiovascular toxicity. Moreover, anti-inflammatory, immunomodulatory, anti-tumor and analgesic effects of crotoxin have also been reported. In terms of biological role, monomer CB: The basic subunit of crotoxin is a snake venom phospholipase A2 (PLA2) that exhibits weak neurotoxicity and strong anticoagulant effects by binding to factor Xa (F10) and inhibiting the prothrombinase activity. In addition, it exerts myotoxicity, nephrotoxicity, and cardiovascular toxicity as well as anti-inflammatory, immunomodulatory, anti-tumor and analgesic effects. Also shows a strong antimicrobial activity against X.axonopodis passiforae (Gram-negative) which is completely dependent on the enzymatic activity. PLA2 catalyzes the calcium-dependent hydrolysis of the 2- acyl groups in 3-sn-phosphoglycerides. The chain is Phospholipase A2 crotoxin basic chain from Crotalus durissus collilineatus (Brazilian rattlesnake).